Reading from the N-terminus, the 428-residue chain is tRNA modification GTPase MnmE (428 aa).

Residues R20, E77, and K117 each coordinate (6S)-5-formyl-5,6,7,8-tetrahydrofolate. Residues 213–351 (GFEVAIVGSP…LVSRISDTLR (139 aa)) form the TrmE-type G domain. GTP is bound by residues 223 to 228 (NVGKST), 242 to 248 (SEYAGTT), and 267 to 270 (DTAG). Residues S227 and T248 each contribute to the Mg(2+) site. K428 lines the (6S)-5-formyl-5,6,7,8-tetrahydrofolate pocket.

This sequence belongs to the TRAFAC class TrmE-Era-EngA-EngB-Septin-like GTPase superfamily. TrmE GTPase family. Homodimer. Heterotetramer of two MnmE and two MnmG subunits. The cofactor is K(+).

The protein localises to the cytoplasm. Functionally, exhibits a very high intrinsic GTPase hydrolysis rate. Involved in the addition of a carboxymethylaminomethyl (cmnm) group at the wobble position (U34) of certain tRNAs, forming tRNA-cmnm(5)s(2)U34. This is tRNA modification GTPase MnmE from Ruegeria sp. (strain TM1040) (Silicibacter sp.).